Reading from the N-terminus, the 612-residue chain is PAN2-PAN3 deadenylation complex subunit PAN3 (612 aa).

The C3H1-type zinc-finger motif lies at 10–39 (WAKDTPCKNITIYGYCKYENDGCIFNHGKP). Residues 44–62 (SNTGGAAAGSAEDSAASGG) show a composition bias toward low complexity. The tract at residues 44-64 (SNTGGAAAGSAEDSAASGGVT) is disordered. 2 short sequence motifs (PABPC-interacting motif-2 (PAM-2)) span residues 84–104 (SVAI…IVSS) and 111–131 (TAFT…SANV). Residues 231-481 (QVFPSDGNLP…TIAEFTALFS (251 aa)) form a pseudokinase domain region. ATP contacts are provided by residues arginine 286, 336 to 343 (DYYPQSNS), and 389 to 390 (DK). A coiled-coil region spans residues 482-520 (HKMLDIISSSQTYSEYIEQHLSRELENGRLFRLMCKLNF). The interval 521–612 (IFGRMESSMD…IDSTFRSMTQ (92 aa)) is knob domain.

Belongs to the protein kinase superfamily. PAN3 family. In terms of assembly, homodimer. Forms a heterotrimer with a catalytic subunit PAN2 to form the poly(A)-nuclease (PAN) deadenylation complex. Interacts (via PAM-2 motif) with poly(A)-binding protein PAB1 (via PABC domain), conferring substrate specificity of the enzyme complex.

The protein localises to the cytoplasm. In terms of biological role, regulatory subunit of the poly(A)-nuclease (PAN) deadenylation complex, one of two cytoplasmic mRNA deadenylases involved in mRNA turnover. PAN specifically shortens poly(A) tails of RNA and the activity is stimulated by poly(A)-binding protein PAB1. PAN deadenylation is followed by rapid degradation of the shortened mRNA tails by the CCR4-NOT complex. Deadenylated mRNAs are then degraded by two alternative mechanisms, namely exosome-mediated 3'-5' exonucleolytic degradation, or deadenylation-dependent mRNA decaping and subsequent 5'-3' exonucleolytic degradation by XRN1. May also be involved in post-transcriptional maturation of mRNA poly(A) tails. PAN3 acts as a positive regulator for PAN activity, recruiting the catalytic subunit PAN2 to mRNA via its interaction with RNA and with PAB1. The sequence is that of PAN2-PAN3 deadenylation complex subunit PAN3 from Eremothecium gossypii (strain ATCC 10895 / CBS 109.51 / FGSC 9923 / NRRL Y-1056) (Yeast).